A 635-amino-acid chain; its full sequence is Threonine--tRNA ligase (635 aa).

One can recognise a TGS domain in the interval 1 to 61; sequence MIQITLPDNS…DHDARLQIIT (61 aa). The tract at residues 242 to 533 is catalytic; it reads DHRKLGKELD…LIEHHAGALP (292 aa). Residues Cys333, His384, and His510 each coordinate Zn(2+).

The protein belongs to the class-II aminoacyl-tRNA synthetase family. Homodimer. Requires Zn(2+) as cofactor.

It is found in the cytoplasm. The enzyme catalyses tRNA(Thr) + L-threonine + ATP = L-threonyl-tRNA(Thr) + AMP + diphosphate + H(+). Its function is as follows. Catalyzes the attachment of threonine to tRNA(Thr) in a two-step reaction: L-threonine is first activated by ATP to form Thr-AMP and then transferred to the acceptor end of tRNA(Thr). Also edits incorrectly charged L-seryl-tRNA(Thr). This Variovorax paradoxus (strain S110) protein is Threonine--tRNA ligase.